The following is a 238-amino-acid chain: 15,16-dihydrobiliverdin:ferredoxin oxidoreductase (238 aa).

Belongs to the HY2 family.

It carries out the reaction 15,16-dihydrobiliverdin + oxidized 2[4Fe-4S]-[ferredoxin] = biliverdin IXalpha + reduced 2[4Fe-4S]-[ferredoxin] + 2 H(+). Its function is as follows. Catalyzes the two-electron reduction of biliverdin IX-alpha at the C15 methine bridge. The sequence is that of 15,16-dihydrobiliverdin:ferredoxin oxidoreductase from Prochlorococcus marinus (strain NATL1A).